Consider the following 362-residue polypeptide: Carbamoyl phosphate synthase pyrimidine-specific small chain (362 aa).

The tract at residues Met1 to Pro168 is CPSase. 3 residues coordinate L-glutamine: Ser45, Gly219, and Gly221. A Glutamine amidotransferase type-1 domain is found at Arg171–Arg358. Cys246 (nucleophile) is an active-site residue. L-glutamine is bound by residues Leu247, Gln250, Asn288, Gly290, and Tyr291. Residues His331 and Glu333 contribute to the active site.

It belongs to the CarA family. Composed of two chains; the small (or glutamine) chain promotes the hydrolysis of glutamine to ammonia, which is used by the large (or ammonia) chain to synthesize carbamoyl phosphate. Tetramer of heterodimers (alpha,beta)4.

It carries out the reaction hydrogencarbonate + L-glutamine + 2 ATP + H2O = carbamoyl phosphate + L-glutamate + 2 ADP + phosphate + 2 H(+). The enzyme catalyses L-glutamine + H2O = L-glutamate + NH4(+). It participates in pyrimidine metabolism; UMP biosynthesis via de novo pathway; (S)-dihydroorotate from bicarbonate: step 1/3. In terms of biological role, small subunit of the glutamine-dependent carbamoyl phosphate synthetase (CPSase). CPSase catalyzes the formation of carbamoyl phosphate from the ammonia moiety of glutamine, carbonate, and phosphate donated by ATP, constituting the first step of the biosynthetic pathway leading to pyrimidine nucleotides. The small subunit (glutamine amidotransferase) binds and cleaves glutamine to supply the large subunit with the substrate ammonia. The sequence is that of Carbamoyl phosphate synthase pyrimidine-specific small chain from Halalkalibacterium halodurans (strain ATCC BAA-125 / DSM 18197 / FERM 7344 / JCM 9153 / C-125) (Bacillus halodurans).